Consider the following 107-residue polypeptide: Probable insulin-like peptide beta-type 3 (107 aa).

An N-terminal signal peptide occupies residues 1 to 19 (MKLSVVLALFIIFQLGAAS). The propeptide occupies 20 to 55 (LMRNWMFDFEKELEHDYDDSEIGFHNIHSLMARSRR). Intrachain disulfides connect cysteine 62/cysteine 90, cysteine 74/cysteine 103, cysteine 78/cysteine 104, and cysteine 89/cysteine 94.

Belongs to the insulin family.

Its subcellular location is the secreted. This Caenorhabditis elegans protein is Probable insulin-like peptide beta-type 3 (ins-3).